Reading from the N-terminus, the 193-residue chain is Recombination protein RecR (193 aa).

A C4-type zinc finger spans residues 61 to 76; that stretch reads CSSCNALSESEVCEIC. Residues 84–170 enclose the Toprim domain; sequence SQLCMVLHPR…TFTKIAQGVP (87 aa).

This sequence belongs to the RecR family.

Its function is as follows. May play a role in DNA repair. It seems to be involved in an RecBC-independent recombinational process of DNA repair. It may act with RecF and RecO. The chain is Recombination protein RecR from Helicobacter pylori (strain P12).